Here is a 278-residue protein sequence, read N- to C-terminus: MFDEFYFRKSLRPRESQNHVRNAACEYILKFMKTEGTIVKTYHLGSSLEPWGRKFHERIDRTVFDQDLTPFVKYTLNKKKRWEAEGNPDILYGLQRSYQNMGVMVAERVSLRSTPHYCIVSINNYYRNFFDQFPIRHLHQLQDHNYQCQSTNSIRGQPFKSLQPENRTPTQVTGHQQESSANVSVAYHIITPPKNYEVLRNKDFRVGHSDRNGIRTIARRRRFQFMKEAVFDLKNEILEDFGDSDDDDENEILLCEESCGPRKFYNLHDHLVKSNHNE.

The interval N152–S179 is disordered. The span at Q163–S179 shows a compositional bias: polar residues.

Functionally, plays a role in innate immunity by conferring resistance to virulent strains of the Gram-negative bacterium P.aeruginosa via the zip-2 pathway and independent of the pmk-1 p38MAPK pathway. Induced as part of several immune responses to translational inhibition arising from endocytosis of ToxA during P.aeruginosa infection or exposure to exogenous cycloheximide. The chain is Protein irg-2 from Caenorhabditis elegans.